Reading from the N-terminus, the 369-residue chain is DNA replication and repair protein RecF (369 aa).

Position 30-37 (30-37) interacts with ATP; it reads GDNGSGKT.

The protein belongs to the RecF family.

It localises to the cytoplasm. In terms of biological role, the RecF protein is involved in DNA metabolism; it is required for DNA replication and normal SOS inducibility. RecF binds preferentially to single-stranded, linear DNA. It also seems to bind ATP. This is DNA replication and repair protein RecF from Pseudomonas paraeruginosa (strain DSM 24068 / PA7) (Pseudomonas aeruginosa (strain PA7)).